An 89-amino-acid polypeptide reads, in one-letter code: Small ribosomal subunit protein uS15 (89 aa).

It belongs to the universal ribosomal protein uS15 family. In terms of assembly, part of the 30S ribosomal subunit. Forms a bridge to the 50S subunit in the 70S ribosome, contacting the 23S rRNA.

One of the primary rRNA binding proteins, it binds directly to 16S rRNA where it helps nucleate assembly of the platform of the 30S subunit by binding and bridging several RNA helices of the 16S rRNA. Functionally, forms an intersubunit bridge (bridge B4) with the 23S rRNA of the 50S subunit in the ribosome. The sequence is that of Small ribosomal subunit protein uS15 from Enterobacter sp. (strain 638).